The sequence spans 214 residues: Rho-related GTP-binding protein RhoJ (214 aa).

Residues cysteine 3 and cysteine 11 are each lipidated (S-palmitoyl cysteine). GTP is bound by residues 31 to 36 (AVGKTC), 46 to 53 (FPEEYVPT), 75 to 79 (DTAGQ), 133 to 136 (TQID), and 177 to 178 (AL). Positions 50–58 (YVPTVFDHY) match the Effector region motif. Cysteine 211 is modified (cysteine methyl ester). Cysteine 211 is lipidated: S-farnesyl cysteine. The propeptide at 212–214 (AII) is removed in mature form.

This sequence belongs to the small GTPase superfamily. Rho family. Interacts with the CRIB domains of proteins such as Pak1 and Was/Wasp. Interacts with GLUL. In terms of processing, palmitoylated; regulates localization to the plasma membrane and may be mediated by GLUL. In terms of tissue distribution, highly expressed in heart with moderate levels in lung and liver. Very low levels detected in brain, spleen, skeletal muscle, kidney and testis.

It localises to the cell membrane. Functionally, plasma membrane-associated small GTPase specifically involved in angiogenesis. Required for endothelial cell migration during vascular development via its interaction with GLUL. Elicits the formation of F-actin-rich structures, thereby regulating endothelial cell migration. In Mus musculus (Mouse), this protein is Rho-related GTP-binding protein RhoJ (Rhoj).